Here is a 407-residue protein sequence, read N- to C-terminus: Imidazolonepropionase (407 aa).

His68 and His70 together coordinate Fe(3+). Positions 68 and 70 each coordinate Zn(2+). Positions 77, 140, and 173 each coordinate 4-imidazolone-5-propanoate. Tyr140 lines the N-formimidoyl-L-glutamate pocket. Position 238 (His238) interacts with Fe(3+). His238 is a binding site for Zn(2+). Residue Gln241 coordinates 4-imidazolone-5-propanoate. Asp313 provides a ligand contact to Fe(3+). Residue Asp313 coordinates Zn(2+). Positions 315 and 317 each coordinate N-formimidoyl-L-glutamate. Residue Thr318 participates in 4-imidazolone-5-propanoate binding.

Belongs to the metallo-dependent hydrolases superfamily. HutI family. It depends on Zn(2+) as a cofactor. Fe(3+) is required as a cofactor.

It is found in the cytoplasm. It catalyses the reaction 4-imidazolone-5-propanoate + H2O = N-formimidoyl-L-glutamate. Its pathway is amino-acid degradation; L-histidine degradation into L-glutamate; N-formimidoyl-L-glutamate from L-histidine: step 3/3. Catalyzes the hydrolytic cleavage of the carbon-nitrogen bond in imidazolone-5-propanoate to yield N-formimidoyl-L-glutamate. It is the third step in the universal histidine degradation pathway. This is Imidazolonepropionase from Burkholderia mallei (strain ATCC 23344).